Consider the following 78-residue polypeptide: Pro-glucagon (78 aa).

This sequence belongs to the glucagon family.

It is found in the secreted. In terms of biological role, plays a key role in glucose metabolism and homeostasis. Regulates blood glucose by increasing gluconeogenesis and decreasing glycolysis. The polypeptide is Pro-glucagon (gcg) (Atractosteus spatula (Alligator gar)).